The primary structure comprises 521 residues: CD166 antigen (521 aa).

Residues 1-465 (GSPVFIAFRS…NREQVNHRAT (465 aa)) lie on the Extracellular side of the membrane. Residues N33, N105, N244, N299, N395, N418, and N437 are each glycosylated (N-linked (GlcNAc...) asparagine). Positions 63 to 172 (PTIVKVFKQP…YGPSGQKTVQ (110 aa)) constitute an Ig-like V-type 2 domain. 4 disulfides stabilise this stretch: C95/C158, C208/C251, C292/C330, and C373/C423. 3 consecutive Ig-like C2-type domains span residues 183 to 266 (PTEQ…TAIT), 271 to 347 (DLSL…ESLT), and 354 to 439 (PQIK…LNVS). Residues 466-487 (LIVGIVLRLLHGALVAGVVYWL) form a helical membrane-spanning segment. The Cytoplasmic portion of the chain corresponds to 488–521 (YVKKSKTASKHVNKDLGNLEENKKLEQNNHRTEA). A disordered region spans residues 500-521 (NKDLGNLEENKKLEQNNHRTEA). The segment covering 507 to 521 (EENKKLEQNNHRTEA) has biased composition (basic and acidic residues).

In terms of assembly, homodimer. Interacts (via extracellular domain) with CD6 (via extracellular domain). Homodimerization and interaction with CD6 involve the same region and cannot occur simultaneously. The affinity for CD6 is much higher than the affinity for self-association. Interacts (via glycosylated extracellular domain) with LGALS1 and LGALS3. Interaction with LGALS1 or LGALS3 inhibits interaction with CD6. In terms of processing, glycosylated.

Its subcellular location is the cell membrane. It is found in the cell projection. It localises to the axon. The protein resides in the dendrite. In terms of biological role, cell adhesion molecule that mediates both heterotypic cell-cell contacts via its interaction with CD6, as well as homotypic cell-cell contacts. Promotes T-cell activation and proliferation via its interactions with CD6. Contributes to the formation and maturation of the immunological synapse via its interactions with CD6. Mediates homotypic interactions with cells that express ALCAM. Mediates attachment of dendritic cells onto endothelial cells via homotypic interaction. Inhibits endothelial cell migration and promotes endothelial tube formation via homotypic interactions. Required for normal organization of the lymph vessel network. Required for normal hematopoietic stem cell engraftment in the bone marrow. Plays a role in hematopoiesis; required for normal numbers of hematopoietic stem cells in bone marrow. Promotes in vitro osteoblast proliferation and differentiation. Promotes neurite extension, axon growth and axon guidance; axons grow preferentially on surfaces that contain ALCAM. Mediates outgrowth and pathfinding for retinal ganglion cell axons. This Canis lupus familiaris (Dog) protein is CD166 antigen (ALCAM).